The following is a 144-amino-acid chain: Large ribosomal subunit protein uL15 (144 aa).

The interval 1 to 44 (MNLNELQPAAGSRHVRNRVGRGTSSGNGKTSGRGQKGQKARGKV) is disordered. The segment covering 23–35 (TSSGNGKTSGRGQ) has biased composition (gly residues).

This sequence belongs to the universal ribosomal protein uL15 family. As to quaternary structure, part of the 50S ribosomal subunit.

Binds to the 23S rRNA. The polypeptide is Large ribosomal subunit protein uL15 (Leuconostoc mesenteroides subsp. mesenteroides (strain ATCC 8293 / DSM 20343 / BCRC 11652 / CCM 1803 / JCM 6124 / NCDO 523 / NBRC 100496 / NCIMB 8023 / NCTC 12954 / NRRL B-1118 / 37Y)).